Reading from the N-terminus, the 145-residue chain is Cytochrome c-type biogenesis protein CcmE (145 aa).

Residues 1 to 7 (MKAKHQR) lie on the Cytoplasmic side of the membrane. A helical; Signal-anchor for type II membrane protein transmembrane segment spans residues 8-28 (LILAVAALCGVAGAGVLAASA). Residues 29 to 145 (LRDEAAYFRT…PKNMKAAVEG (117 aa)) are Periplasmic-facing. His123 and Tyr127 together coordinate heme.

It belongs to the CcmE/CycJ family.

The protein resides in the cell inner membrane. Functionally, heme chaperone required for the biogenesis of c-type cytochromes. Transiently binds heme delivered by CcmC and transfers the heme to apo-cytochromes in a process facilitated by CcmF and CcmH. The protein is Cytochrome c-type biogenesis protein CcmE of Sphingopyxis alaskensis (strain DSM 13593 / LMG 18877 / RB2256) (Sphingomonas alaskensis).